Reading from the N-terminus, the 870-residue chain is DNA mismatch repair protein MutS (870 aa).

An ATP-binding site is contributed by 629 to 636 (GPNMGGKS).

This sequence belongs to the DNA mismatch repair MutS family.

Functionally, this protein is involved in the repair of mismatches in DNA. It is possible that it carries out the mismatch recognition step. This protein has a weak ATPase activity. The polypeptide is DNA mismatch repair protein MutS (Polaromonas naphthalenivorans (strain CJ2)).